Consider the following 371-residue polypeptide: Barbiturase 2 (371 aa).

The segment at 1-104 is RU A; sequence MTRPIEVRKV…TIFAYAPEGR (104 aa). Substrate contacts are provided by residues Arg-53 and 83 to 84; that span reads SG. The RU B stretch occupies residues 112 to 247; the sequence is RVTVGYAMSE…AQIVVVGNAR (136 aa). Residue Lys-162 is part of the active site. Residues Asn-194 and 230-231 each bind substrate; that span reads SS. Catalysis depends on Ser-230, which acts as the Nucleophile. Residues 253–371 form an RU C region; sequence FRVGHSIMKD…PVIAIVDLEA (119 aa). A Mg(2+)-binding site is contributed by Glu-303. Substrate contacts are provided by residues Lys-330 and 349–350; that span reads SV. Residues Ala-352, Gln-355, Gly-356, Pro-357, and Gly-360 each coordinate Mg(2+).

This sequence belongs to the cyclic amide hydrolase (CyAH) family. Homotetramer.

The enzyme catalyses barbiturate + H2O = 3-oxo-3-ureidopropanoate. It functions in the pathway pyrimidine metabolism; uracil degradation via oxidative pathway; malonate and urea from uracil: step 2/3. Responsible for the hydrolysis of barbituric acid (2,4,6-trihydroxy-1,3-pyrimidine), an intermediate in the oxidative catabolism of pyrimidines. Catalyzes the hydrolytic opening of the pyrimidine ring of barbituric acid to yield ureidomalonic acid. Can also use cyanuric acid as a substrate, albeit with lower efficiency. The chain is Barbiturase 2 from Nocardioides sp. (strain ATCC BAA-499 / JS614).